Here is a 93-residue protein sequence, read N- to C-terminus: Integration host factor subunit beta (93 aa).

This sequence belongs to the bacterial histone-like protein family. As to quaternary structure, heterodimer of an alpha and a beta chain.

Functionally, this protein is one of the two subunits of integration host factor, a specific DNA-binding protein that functions in genetic recombination as well as in transcriptional and translational control. In Vibrio vulnificus (strain YJ016), this protein is Integration host factor subunit beta.